The chain runs to 173 residues: Ribosome maturation factor RimM (173 aa).

Positions 93–166 constitute a PRC barrel domain; it reads EDEYLVSDMI…KMLVDTIEGM (74 aa).

This sequence belongs to the RimM family. As to quaternary structure, binds ribosomal protein uS19.

The protein resides in the cytoplasm. Its function is as follows. An accessory protein needed during the final step in the assembly of 30S ribosomal subunit, possibly for assembly of the head region. Essential for efficient processing of 16S rRNA. May be needed both before and after RbfA during the maturation of 16S rRNA. It has affinity for free ribosomal 30S subunits but not for 70S ribosomes. The sequence is that of Ribosome maturation factor RimM from Fusobacterium nucleatum subsp. nucleatum (strain ATCC 25586 / DSM 15643 / BCRC 10681 / CIP 101130 / JCM 8532 / KCTC 2640 / LMG 13131 / VPI 4355).